Here is a 153-residue protein sequence, read N- to C-terminus: UPF0756 membrane protein LSL_0936 (153 aa).

A run of 5 helical transmembrane segments spans residues 4–24, 26–46, 51–71, 86–106, and 116–136; these read WIFLGLILLIAYLGKNSSLLI, GAVVIVIKLFPFLSQKLYPVI, INWGVTIISVAILIPIATGQI, WIAVVCGILVAILSKHGVNLL, and LVIGTIIGVVFLKGVAAGPVI.

This sequence belongs to the UPF0756 family.

The protein resides in the cell membrane. The polypeptide is UPF0756 membrane protein LSL_0936 (Ligilactobacillus salivarius (strain UCC118) (Lactobacillus salivarius)).